Reading from the N-terminus, the 192-residue chain is Visinin (192 aa).

Gly2 carries N-myristoyl glycine lipidation. EF-hand domains are found at residues 24–59, 61–96, 97–132, and 146–181; these read TEEE…FFPN, EPQG…TSSG, KTHL…IFKM, and NSPQ…KNDA. 13 residues coordinate Ca(2+): Asp74, Asn76, Asp78, Thr80, Glu85, Asp110, Asp112, Asn114, Glu116, Glu121, Asn164, Lys166, and Glu171.

Belongs to the recoverin family. Retinal cell specific protein.

In terms of biological role, seems to be implicated in the pathway from retinal rod guanylate cyclase to rhodopsin. May be involved in the blocking of the phosphorylation of rhodopsin. In Gallus gallus (Chicken), this protein is Visinin.